Here is a 518-residue protein sequence, read N- to C-terminus: Glutamate--cysteine ligase (518 aa).

The protein belongs to the glutamate--cysteine ligase type 1 family. Type 1 subfamily.

The catalysed reaction is L-cysteine + L-glutamate + ATP = gamma-L-glutamyl-L-cysteine + ADP + phosphate + H(+). It participates in sulfur metabolism; glutathione biosynthesis; glutathione from L-cysteine and L-glutamate: step 1/2. This chain is Glutamate--cysteine ligase, found in Buchnera aphidicola subsp. Acyrthosiphon pisum (strain 5A).